We begin with the raw amino-acid sequence, 388 residues long: Succinate--CoA ligase [ADP-forming] subunit beta (388 aa).

Residues Lys-9 to His-244 enclose the ATP-grasp domain. Residues Lys-46, Gly-53–Gly-55, Glu-99, Thr-102, and Glu-107 each bind ATP. 2 residues coordinate Mg(2+): Asn-199 and Asp-213. Residues Asn-264 and Gly-321–Val-323 each bind substrate.

The protein belongs to the succinate/malate CoA ligase beta subunit family. Heterotetramer of two alpha and two beta subunits. It depends on Mg(2+) as a cofactor.

It catalyses the reaction succinate + ATP + CoA = succinyl-CoA + ADP + phosphate. The catalysed reaction is GTP + succinate + CoA = succinyl-CoA + GDP + phosphate. Its pathway is carbohydrate metabolism; tricarboxylic acid cycle; succinate from succinyl-CoA (ligase route): step 1/1. Functionally, succinyl-CoA synthetase functions in the citric acid cycle (TCA), coupling the hydrolysis of succinyl-CoA to the synthesis of either ATP or GTP and thus represents the only step of substrate-level phosphorylation in the TCA. The beta subunit provides nucleotide specificity of the enzyme and binds the substrate succinate, while the binding sites for coenzyme A and phosphate are found in the alpha subunit. This Shewanella oneidensis (strain ATCC 700550 / JCM 31522 / CIP 106686 / LMG 19005 / NCIMB 14063 / MR-1) protein is Succinate--CoA ligase [ADP-forming] subunit beta.